Reading from the N-terminus, the 434-residue chain is Nicotinate phosphoribosyltransferase (434 aa).

A Phosphohistidine; by autocatalysis modification is found at His242.

The protein belongs to the NAPRTase family. In terms of processing, transiently phosphorylated on a His residue during the reaction cycle. Phosphorylation strongly increases the affinity for substrates and increases the rate of nicotinate D-ribonucleotide production. Dephosphorylation regenerates the low-affinity form of the enzyme, leading to product release.

The catalysed reaction is nicotinate + 5-phospho-alpha-D-ribose 1-diphosphate + ATP + H2O = nicotinate beta-D-ribonucleotide + ADP + phosphate + diphosphate. Its pathway is cofactor biosynthesis; NAD(+) biosynthesis; nicotinate D-ribonucleotide from nicotinate: step 1/1. Functionally, catalyzes the synthesis of beta-nicotinate D-ribonucleotide from nicotinate and 5-phospho-D-ribose 1-phosphate at the expense of ATP. The chain is Nicotinate phosphoribosyltransferase from Brucella canis (strain ATCC 23365 / NCTC 10854 / RM-666).